The chain runs to 115 residues: U3-lycotoxin-Ls1i (115 aa).

A signal peptide spans 1–20 (MKFVLLFGVFLVTLFSYSSA). The propeptide occupies 21–44 (EMLDDFDQADEDELLSLIEKEEAR). 4 disulfide bridges follow: Cys-48/Cys-63, Cys-55/Cys-72, Cys-62/Cys-87, and Cys-74/Cys-85.

Belongs to the neurotoxin 19 (CSTX) family. 01 subfamily. As to expression, expressed by the venom gland.

The protein resides in the secreted. The polypeptide is U3-lycotoxin-Ls1i (Lycosa singoriensis (Wolf spider)).